A 252-amino-acid polypeptide reads, in one-letter code: tRNA pseudouridine synthase A (252 aa).

The Nucleophile role is filled by D51. Position 105 (Y105) interacts with substrate.

This sequence belongs to the tRNA pseudouridine synthase TruA family.

It catalyses the reaction uridine(38/39/40) in tRNA = pseudouridine(38/39/40) in tRNA. Functionally, formation of pseudouridine at positions 38, 39 and 40 in the anticodon stem and loop of transfer RNAs. The protein is tRNA pseudouridine synthase A of Thermoplasma acidophilum (strain ATCC 25905 / DSM 1728 / JCM 9062 / NBRC 15155 / AMRC-C165).